The following is a 362-amino-acid chain: 3-isopropylmalate dehydrogenase (362 aa).

78–91 (GPQWDTLPSDKRPE) serves as a coordination point for NAD(+). Residues Arg-98, Arg-108, Arg-136, and Asp-226 each coordinate substrate. Positions 226, 250, and 254 each coordinate Mg(2+). Residue 284–296 (GSAPDIAGQDKAN) participates in NAD(+) binding.

Belongs to the isocitrate and isopropylmalate dehydrogenases family. LeuB type 1 subfamily. In terms of assembly, homodimer. The cofactor is Mg(2+). It depends on Mn(2+) as a cofactor.

It localises to the cytoplasm. The catalysed reaction is (2R,3S)-3-isopropylmalate + NAD(+) = 4-methyl-2-oxopentanoate + CO2 + NADH. It participates in amino-acid biosynthesis; L-leucine biosynthesis; L-leucine from 3-methyl-2-oxobutanoate: step 3/4. In terms of biological role, catalyzes the oxidation of 3-carboxy-2-hydroxy-4-methylpentanoate (3-isopropylmalate) to 3-carboxy-4-methyl-2-oxopentanoate. The product decarboxylates to 4-methyl-2 oxopentanoate. In Gloeobacter violaceus (strain ATCC 29082 / PCC 7421), this protein is 3-isopropylmalate dehydrogenase.